We begin with the raw amino-acid sequence, 338 residues long: Ketol-acid reductoisomerase (NADP(+)) (338 aa).

Residues M1–T181 enclose the KARI N-terminal Rossmann domain. NADP(+) contacts are provided by residues Y24–Q27, R47, S50, S52, and D82–Q85. H107 is a catalytic residue. NADP(+) is bound at residue G133. Residues S182 to I327 form the KARI C-terminal knotted domain. The Mg(2+) site is built by D190, E194, E226, and E230. Substrate is bound at residue S251.

Belongs to the ketol-acid reductoisomerase family. It depends on Mg(2+) as a cofactor.

It carries out the reaction (2R)-2,3-dihydroxy-3-methylbutanoate + NADP(+) = (2S)-2-acetolactate + NADPH + H(+). The catalysed reaction is (2R,3R)-2,3-dihydroxy-3-methylpentanoate + NADP(+) = (S)-2-ethyl-2-hydroxy-3-oxobutanoate + NADPH + H(+). Its pathway is amino-acid biosynthesis; L-isoleucine biosynthesis; L-isoleucine from 2-oxobutanoate: step 2/4. The protein operates within amino-acid biosynthesis; L-valine biosynthesis; L-valine from pyruvate: step 2/4. Its function is as follows. Involved in the biosynthesis of branched-chain amino acids (BCAA). Catalyzes an alkyl-migration followed by a ketol-acid reduction of (S)-2-acetolactate (S2AL) to yield (R)-2,3-dihydroxy-isovalerate. In the isomerase reaction, S2AL is rearranged via a Mg-dependent methyl migration to produce 3-hydroxy-3-methyl-2-ketobutyrate (HMKB). In the reductase reaction, this 2-ketoacid undergoes a metal-dependent reduction by NADPH to yield (R)-2,3-dihydroxy-isovalerate. This is Ketol-acid reductoisomerase (NADP(+)) from Geobacter metallireducens (strain ATCC 53774 / DSM 7210 / GS-15).